The following is a 242-amino-acid chain: Uridylate kinase (242 aa).

11–14 provides a ligand contact to ATP; it reads KLSG. The involved in allosteric activation by GTP stretch occupies residues 19–24; it reads GEKGAG. G53 is a UMP binding site. ATP contacts are provided by G54 and R58. UMP is bound by residues D73 and 134-141; that span reads IGSPYFST. N162, Y168, and D171 together coordinate ATP.

The protein belongs to the UMP kinase family. In terms of assembly, homohexamer.

Its subcellular location is the cytoplasm. It carries out the reaction UMP + ATP = UDP + ADP. It participates in pyrimidine metabolism; CTP biosynthesis via de novo pathway; UDP from UMP (UMPK route): step 1/1. With respect to regulation, allosterically activated by GTP. Inhibited by UTP. Its function is as follows. Catalyzes the reversible phosphorylation of UMP to UDP. This chain is Uridylate kinase, found in Streptococcus pyogenes serotype M2 (strain MGAS10270).